We begin with the raw amino-acid sequence, 512 residues long: ETS translocation variant 3 (512 aa).

Residues 35–116 (IQLWHFILEL…KGKRFTYKFN (82 aa)) constitute a DNA-binding region (ETS). The tract at residues 138–196 (QSAPPVPTASSRFHFPPLDTHSPTSDVQPGRFSASSLTASGQESSNGTDRKAELSXLED) is disordered. 3 positions are modified to phosphoserine: Ser-139, Ser-159, and Ser-315. Over residues 158–184 (HSPTSDVQPGRFSASSLTASGQESSNG) the composition is skewed to polar residues. The tract at residues 341 to 512 (QFSIKLQPPP…QGLATAAADA (172 aa)) is disordered. The span at 380-406 (IKVEPASEKDAESLRQSAREKEEHTXE) shows a compositional bias: basic and acidic residues. Lys-381 participates in a covalent cross-link: Glycyl lysine isopeptide (Lys-Gly) (interchain with G-Cter in SUMO2). Lys-388 bears the N6-acetyllysine; alternate mark. A Glycyl lysine isopeptide (Lys-Gly) (interchain with G-Cter in SUMO2); alternate cross-link involves residue Lys-388. The segment covering 443 to 452 (EPLEVTEDIE) has biased composition (acidic residues). 2 stretches are compositionally biased toward basic and acidic residues: residues 453–468 (DRPG…KEDA) and 479–491 (RWND…ELSK).

Belongs to the ETS family.

It is found in the nucleus. Transcriptional repressor that contribute to growth arrest during terminal macrophage differentiation by repressing target genes involved in Ras-dependent proliferation. Represses MMP1 promoter activity. This chain is ETS translocation variant 3 (ETV3), found in Ateles geoffroyi (Black-handed spider monkey).